A 414-amino-acid polypeptide reads, in one-letter code: 25-hydroxycholesterol 7-alpha-hydroxylase (414 aa).

Cys354 contributes to the heme binding site.

It belongs to the cytochrome P450 family. It depends on heme as a cofactor. Highly expressed in brain; also expressed in liver and kidney.

It localises to the endoplasmic reticulum membrane. The protein localises to the microsome membrane. It catalyses the reaction 25-hydroxycholesterol + reduced [NADPH--hemoprotein reductase] + O2 = 7alpha,25-dihydroxycholesterol + oxidized [NADPH--hemoprotein reductase] + H2O + H(+). The enzyme catalyses (25R)-cholest-5-ene-3beta,26-diol + reduced [NADPH--hemoprotein reductase] + O2 = (25R)-cholest-5-en-3beta,7alpha,26-triol + oxidized [NADPH--hemoprotein reductase] + H2O + H(+). The protein operates within lipid metabolism; bile acid biosynthesis. In terms of biological role, oxysterol 7alpha-hydroxylase that mediates formation of 7-alpha,25-dihydroxycholesterol (7-alpha,25-OHC) from 25-hydroxycholesterol. Plays a key role in cell positioning and movement in lymphoid tissues: 7-alpha,25-dihydroxycholesterol (7-alpha,25-OHC) acts as a ligand for the G protein-coupled receptor GPR183/EBI2, a chemotactic receptor for a number of lymphoid cells. In Rattus norvegicus (Rat), this protein is 25-hydroxycholesterol 7-alpha-hydroxylase (Cyp7b1).